The chain runs to 285 residues: NADPH-dependent 7-cyano-7-deazaguanine reductase (285 aa).

91–93 (IES) provides a ligand contact to substrate. 93–94 (SK) lines the NADPH pocket. The active-site Thioimide intermediate is the C193. The active-site Proton donor is D200. 232 to 233 (HE) serves as a coordination point for substrate. 261–262 (RG) is an NADPH binding site.

The protein belongs to the GTP cyclohydrolase I family. QueF type 2 subfamily. As to quaternary structure, homodimer.

The protein localises to the cytoplasm. It catalyses the reaction 7-aminomethyl-7-carbaguanine + 2 NADP(+) = 7-cyano-7-deazaguanine + 2 NADPH + 3 H(+). It functions in the pathway tRNA modification; tRNA-queuosine biosynthesis. Its function is as follows. Catalyzes the NADPH-dependent reduction of 7-cyano-7-deazaguanine (preQ0) to 7-aminomethyl-7-deazaguanine (preQ1). This Shewanella baltica (strain OS223) protein is NADPH-dependent 7-cyano-7-deazaguanine reductase.